Here is a 123-residue protein sequence, read N- to C-terminus: Large ribosomal subunit protein uL14c (123 aa).

It belongs to the universal ribosomal protein uL14 family. Part of the 50S ribosomal subunit.

It is found in the plastid. It localises to the chloroplast. Its function is as follows. Binds to 23S rRNA. This is Large ribosomal subunit protein uL14c from Sorghum bicolor (Sorghum).